The following is a 113-amino-acid chain: Retrotransposon Gag-like protein 8B (113 aa).

This sequence belongs to the FAM127 family.

In Homo sapiens (Human), this protein is Retrotransposon Gag-like protein 8B (RTL8B).